Here is a 94-residue protein sequence, read N- to C-terminus: Putative pterin-4-alpha-carbinolamine dehydratase (94 aa).

Belongs to the pterin-4-alpha-carbinolamine dehydratase family.

It catalyses the reaction (4aS,6R)-4a-hydroxy-L-erythro-5,6,7,8-tetrahydrobiopterin = (6R)-L-erythro-6,7-dihydrobiopterin + H2O. The sequence is that of Putative pterin-4-alpha-carbinolamine dehydratase from Koribacter versatilis (strain Ellin345).